Consider the following 328-residue polypeptide: MRAPGFWHEPAGVASTLLAPLGALYAAGTARRLRTGPRVRVDVPVICIGNINAGGTGKTPTAIALAQRLLAKGVKVHAVTRGYGGEVEGPLCVEERTHTAKQVGDEALLLSAFLPTWVSTDRQAGARAAVADGAECLILDDGFQNPALAYDLSIVVVDAWRGFGNGRVIPAGPLREPVEIGLKRADIVLSIGPDAAQQRFATTWGRHIAVPHLTGTLQPLPTGLPLDGLPVLAFAGIGHPEKFFQTLRSLGADLHATHALADHQPLTDTLMIRLLRDASMRGAQVVTTEKDAVRLSPEFRAQVMTVPVRLEVDDWGPLDSAVDKVLGR.

ATP is bound at residue 52–59; the sequence is NAGGTGKT.

This sequence belongs to the LpxK family.

It catalyses the reaction a lipid A disaccharide + ATP = a lipid IVA + ADP + H(+). The protein operates within glycolipid biosynthesis; lipid IV(A) biosynthesis; lipid IV(A) from (3R)-3-hydroxytetradecanoyl-[acyl-carrier-protein] and UDP-N-acetyl-alpha-D-glucosamine: step 6/6. In terms of biological role, transfers the gamma-phosphate of ATP to the 4'-position of a tetraacyldisaccharide 1-phosphate intermediate (termed DS-1-P) to form tetraacyldisaccharide 1,4'-bis-phosphate (lipid IVA). This Jannaschia sp. (strain CCS1) protein is Tetraacyldisaccharide 4'-kinase.